The following is a 776-amino-acid chain: Venom dipeptidyl peptidase 4 (776 aa).

The signal sequence occupies residues 1 to 25 (MVPLRSFVLLNSLFLVLLAARTVVT). N-linked (GlcNAc...) asparagine glycosylation is found at Asn-44, Asn-66, and Asn-329. 2 disulfide bridges follow: Cys-449–Cys-452 and Cys-462–Cys-480. N-linked (GlcNAc...) asparagine glycans are attached at residues Asn-504 and Asn-577. Ser-638 functions as the Charge relay system in the catalytic mechanism. Cysteines 658 and 769 form a disulfide. N-linked (GlcNAc...) asparagine glycans are attached at residues Asn-688 and Asn-693. Catalysis depends on charge relay system residues Asp-717 and His-749.

It belongs to the peptidase S9B family. DPPIV subfamily. As to expression, expressed by the venom gland.

Its subcellular location is the secreted. It catalyses the reaction Release of an N-terminal dipeptide, Xaa-Yaa-|-Zaa-, from a polypeptide, preferentially when Yaa is Pro, provided Zaa is neither Pro nor hydroxyproline.. With respect to regulation, inhibited by diprotin A. Venom dipeptidyl-peptidase which removes N-terminal dipeptides sequentially from polypeptides having unsubstituted N-termini provided that the penultimate residue is proline. May process venom proteins into their active forms and/or modulate the chemotactic activity of immune cells after the insect sting. The protein is Venom dipeptidyl peptidase 4 of Vespula vulgaris (Yellow jacket).